The primary structure comprises 428 residues: MNKKINSVRGMHDYLPEELKIWKKIENIIQKILTSYCYEEIRLPILEKTKIFQRAIGNITDVVEKEMYSFKDKKGNSLTLRPEGTVGCVRAIIENNLLFQKKQRFWYLGPMFRYERPQKGRYRQFYQLGVEVFGLNTPDIDLEIILLISRLWKCLGINLHIKLEINSIGSKLDRIKYQKELVFFLEKYKNILDEDSKKRLYTNPFRILDSKNDMMQKILKKAPLLKNYINTSAINHFNSLCNMMDSYGIKYIHNQNLVRGLDYYNSTVFEWKIDQIGSQNTICAGGRYDSLVQELGGNKTSAIGFAIGIERLVLLIKSLNIISCKEEDINIYIIFIGELNKIYAISLSEEIRNIYPKLKIFVDFMTCSLSKKIKNAVDSLAHIAILIGANEIKKNCFLLKDLKRGREYFFSKSELILKIKKIFYKQGN.

This sequence belongs to the class-II aminoacyl-tRNA synthetase family. Homodimer.

The protein resides in the cytoplasm. The enzyme catalyses tRNA(His) + L-histidine + ATP = L-histidyl-tRNA(His) + AMP + diphosphate + H(+). This is Histidine--tRNA ligase from Buchnera aphidicola subsp. Schizaphis graminum (strain Sg).